The chain runs to 204 residues: Urease accessory protein UreG (204 aa).

Position 13-20 (13-20 (GPVGSGKT)) interacts with GTP.

The protein belongs to the SIMIBI class G3E GTPase family. UreG subfamily. Homodimer. UreD, UreF and UreG form a complex that acts as a GTP-hydrolysis-dependent molecular chaperone, activating the urease apoprotein by helping to assemble the nickel containing metallocenter of UreC. The UreE protein probably delivers the nickel.

Its subcellular location is the cytoplasm. In terms of biological role, facilitates the functional incorporation of the urease nickel metallocenter. This process requires GTP hydrolysis, probably effectuated by UreG. The protein is Urease accessory protein UreG of Acinetobacter baylyi (strain ATCC 33305 / BD413 / ADP1).